The following is an 87-amino-acid chain: Phosphoribosyl-ATP pyrophosphatase (87 aa).

It belongs to the PRA-PH family.

It is found in the cytoplasm. The enzyme catalyses 1-(5-phospho-beta-D-ribosyl)-ATP + H2O = 1-(5-phospho-beta-D-ribosyl)-5'-AMP + diphosphate + H(+). It functions in the pathway amino-acid biosynthesis; L-histidine biosynthesis; L-histidine from 5-phospho-alpha-D-ribose 1-diphosphate: step 2/9. The polypeptide is Phosphoribosyl-ATP pyrophosphatase (Bifidobacterium longum (strain DJO10A)).